Reading from the N-terminus, the 214-residue chain is MVIDKSIPKATAKRLSLYYRIFKRFYADQVEKASSKQIADAMGIDSATVRRDFSYFGELGRRGFGYDVTKLMNFFADLLNDHSTTHVILVGCGNIGRALLHYRFHDRNKMQIVMGFDTDDNPMVGTKTPDDIPIYGISTIKEHLDNSGIETAILTVPSIYAQEVADQLIEAGIRGILSFAPLHLQVPKGVIVQSVDLTSELQTLLYFMNQNHLD.

The segment at residues 17 to 56 (LYYRIFKRFYADQVEKASSKQIADAMGIDSATVRRDFSYF) is a DNA-binding region (H-T-H motif). 91–96 (GCGNIG) contacts NAD(+).

It belongs to the transcriptional regulatory Rex family. In terms of assembly, homodimer.

Its subcellular location is the cytoplasm. In terms of biological role, modulates transcription in response to changes in cellular NADH/NAD(+) redox state. The chain is Redox-sensing transcriptional repressor Rex from Streptococcus equi subsp. zooepidemicus (strain H70).